A 644-amino-acid chain; its full sequence is 1-deoxy-D-xylulose-5-phosphate synthase (644 aa).

Thiamine diphosphate contacts are provided by residues His72 and 113–115 (GHA). Asp144 provides a ligand contact to Mg(2+). Thiamine diphosphate is bound by residues 145-146 (GA), Asn174, Tyr287, and Glu370. Asn174 is a Mg(2+) binding site.

The protein belongs to the transketolase family. DXPS subfamily. As to quaternary structure, homodimer. Requires Mg(2+) as cofactor. Thiamine diphosphate is required as a cofactor.

It carries out the reaction D-glyceraldehyde 3-phosphate + pyruvate + H(+) = 1-deoxy-D-xylulose 5-phosphate + CO2. Its pathway is metabolic intermediate biosynthesis; 1-deoxy-D-xylulose 5-phosphate biosynthesis; 1-deoxy-D-xylulose 5-phosphate from D-glyceraldehyde 3-phosphate and pyruvate: step 1/1. Its function is as follows. Catalyzes the acyloin condensation reaction between C atoms 2 and 3 of pyruvate and glyceraldehyde 3-phosphate to yield 1-deoxy-D-xylulose-5-phosphate (DXP). This Prochlorococcus marinus (strain MIT 9303) protein is 1-deoxy-D-xylulose-5-phosphate synthase.